The primary structure comprises 293 residues: Glycerophosphodiester phosphodiesterase (293 aa).

A signal peptide spans 1–26 (MRKNRILALFVLSLGLLSFMVTPVSA). The GP-PDE domain maps to 38–290 (ILTVAHRGAS…NYPDLFHKVK (253 aa)). H43 acts as the Proton acceptor in catalysis. 3 residues coordinate sn-glycerol 3-phosphate: H43, R44, and E70. 2 residues coordinate Ca(2+): E70 and D72. Sn-glycerol 3-phosphate-binding residues include H85, E152, and Q188. The active-site Proton donor is the H85. E152 is a Ca(2+) binding site.

This sequence belongs to the glycerophosphoryl diester phosphodiesterase family. Ca(2+) is required as a cofactor.

It is found in the secreted. It carries out the reaction a sn-glycero-3-phosphodiester + H2O = an alcohol + sn-glycerol 3-phosphate + H(+). Functionally, glycerophosphodiester phosphodiesterase hydrolyzes glycerophosphodiesters into glycerol-3-phosphate (G3P) and the corresponding alcohol. Involved in wall teichoic acid (WTA) metabolism during phosphate starvation. Catalyzes the degradation of WTA, enabling the utilization of WTA as a phosphate reserve under limiting conditions. Is highly selective for the poly(gylcerol phosphate) WTA backbone and catalyzes exolytic cleavage of individual monomer units. In vitro is active toward the WTA oligomer mimics glycerophosphoglycerol (GPG) and bis-glycerophosphoglycerol (bGPG). The protein is Glycerophosphodiester phosphodiesterase of Bacillus subtilis (strain 168).